Consider the following 464-residue polypeptide: Aspartyl protease AED1 (464 aa).

The signal sequence occupies residues 1–25 (MSIMRNFLSMIIMLCVCLNWCFAEG). Residues 132-460 (YIVTIGIGTP…DVAGGRVGFA (329 aa)) enclose the Peptidase A1 domain. Active-site residues include aspartate 150 and aspartate 345. A disulfide bridge links cysteine 384 with cysteine 425.

Belongs to the peptidase A1 family.

It localises to the secreted. The protein resides in the extracellular space. It is found in the apoplast. Aspartyl protease involved in a homeostatic feedback mechanism regulating systemic immunity. Has only mild or no influence on local defenses. Acts downstream of salicylic acid to suppress systemic immunity. The sequence is that of Aspartyl protease AED1 from Arabidopsis thaliana (Mouse-ear cress).